Consider the following 343-residue polypeptide: uncharacterized protein (343 aa).

11 helical membrane-spanning segments follow: residues 13–33, 44–64, 71–91, 121–141, 148–168, 177–197, 203–223, 244–264, 269–289, 296–316, and 320–340; these read VILY…SMCG, LWGY…ATLD, MHPV…LFFI, ILLL…LTGL, NASL…YLIF, FLGI…GDFS, VAVT…LDTV, VGGF…ELPL, YALG…YIAI, MVGA…FIIL, and FSIM…ILYW. EamA domains are found at residues 55–192 and 216–340; these read IFFG…YLLT and FFWS…ILYW.

This sequence belongs to the EamA transporter family.

It localises to the cell membrane. This is an uncharacterized protein from Methanothermobacter thermautotrophicus (strain ATCC 29096 / DSM 1053 / JCM 10044 / NBRC 100330 / Delta H) (Methanobacterium thermoautotrophicum).